Reading from the N-terminus, the 141-residue chain is Nucleoside diphosphate kinase (141 aa).

ATP-binding residues include lysine 11, phenylalanine 59, arginine 87, threonine 93, arginine 104, and asparagine 114. The active-site Pros-phosphohistidine intermediate is histidine 117.

This sequence belongs to the NDK family. As to quaternary structure, homotetramer. The cofactor is Mg(2+).

It is found in the cytoplasm. The catalysed reaction is a 2'-deoxyribonucleoside 5'-diphosphate + ATP = a 2'-deoxyribonucleoside 5'-triphosphate + ADP. The enzyme catalyses a ribonucleoside 5'-diphosphate + ATP = a ribonucleoside 5'-triphosphate + ADP. Functionally, major role in the synthesis of nucleoside triphosphates other than ATP. The ATP gamma phosphate is transferred to the NDP beta phosphate via a ping-pong mechanism, using a phosphorylated active-site intermediate. This is Nucleoside diphosphate kinase from Pseudomonas putida (strain ATCC 47054 / DSM 6125 / CFBP 8728 / NCIMB 11950 / KT2440).